The chain runs to 93 residues: Alpha-defensin 23 (93 aa).

A signal peptide spans 1-19 (MKTLVLLSALILLAFQVQA). A propeptide spanning residues 20–58 (DPIQNTDEETKTEEQPGKEDQAVSVSFGDPEGSSLQEES) is cleaved from the precursor. The tract at residues 24–54 (NTDEETKTEEQPGKEDQAVSVSFGDPEGSSL) is disordered. The segment covering 27-40 (EETKTEEQPGKEDQ) has biased composition (basic and acidic residues). 3 disulfides stabilise this stretch: Cys64–Cys92, Cys66–Cys81, and Cys71–Cys91.

Belongs to the alpha-defensin family.

Its subcellular location is the secreted. In terms of biological role, may have microbicidal activities. In Mus musculus (Mouse), this protein is Alpha-defensin 23 (Defa23).